A 238-amino-acid polypeptide reads, in one-letter code: Ribonuclease PH (238 aa).

Phosphate contacts are provided by residues Arg-86 and 124–126; that span reads GTR.

Belongs to the RNase PH family. Homohexameric ring arranged as a trimer of dimers.

The catalysed reaction is tRNA(n+1) + phosphate = tRNA(n) + a ribonucleoside 5'-diphosphate. Its function is as follows. Phosphorolytic 3'-5' exoribonuclease that plays an important role in tRNA 3'-end maturation. Removes nucleotide residues following the 3'-CCA terminus of tRNAs; can also add nucleotides to the ends of RNA molecules by using nucleoside diphosphates as substrates, but this may not be physiologically important. Probably plays a role in initiation of 16S rRNA degradation (leading to ribosome degradation) during starvation. The chain is Ribonuclease PH from Shigella flexneri serotype 5b (strain 8401).